A 716-amino-acid chain; its full sequence is Translation initiation factor IF-2 (716 aa).

The disordered stretch occupies residues 50-136 (YKKGGARAKS…VKPKKELPEK (87 aa)). The span at 62 to 84 (PAETNKNKQPQGVNQQSAGNQPN) shows a compositional bias: polar residues. Basic residues predominate over residues 101-113 (KNKKNNNNKKNKR). A compositionally biased stretch (low complexity) spans 114-126 (NNNNNKNQHQQKP). The region spanning 217–386 (IRPPVVTIMG…LLVSEVEELK (170 aa)) is the tr-type G domain. Residues 226-233 (GHVDHGKT) form a G1 region. Residue 226–233 (GHVDHGKT) coordinates GTP. Positions 251 to 255 (GITQH) are G2. The segment at 272 to 275 (DTPG) is G3. GTP-binding positions include 272–276 (DTPGH) and 326–329 (NKID). The tract at residues 326 to 329 (NKID) is G4. The interval 362–364 (SAL) is G5.

Belongs to the TRAFAC class translation factor GTPase superfamily. Classic translation factor GTPase family. IF-2 subfamily.

The protein resides in the cytoplasm. In terms of biological role, one of the essential components for the initiation of protein synthesis. Protects formylmethionyl-tRNA from spontaneous hydrolysis and promotes its binding to the 30S ribosomal subunits. Also involved in the hydrolysis of GTP during the formation of the 70S ribosomal complex. The polypeptide is Translation initiation factor IF-2 (infB) (Bacillus subtilis (strain 168)).